The sequence spans 209 residues: Protein GrpE (209 aa).

This sequence belongs to the GrpE family. Homodimer.

The protein resides in the cytoplasm. Participates actively in the response to hyperosmotic and heat shock by preventing the aggregation of stress-denatured proteins, in association with DnaK and GrpE. It is the nucleotide exchange factor for DnaK and may function as a thermosensor. Unfolded proteins bind initially to DnaJ; upon interaction with the DnaJ-bound protein, DnaK hydrolyzes its bound ATP, resulting in the formation of a stable complex. GrpE releases ADP from DnaK; ATP binding to DnaK triggers the release of the substrate protein, thus completing the reaction cycle. Several rounds of ATP-dependent interactions between DnaJ, DnaK and GrpE are required for fully efficient folding. The sequence is that of Protein GrpE from Colwellia psychrerythraea (strain 34H / ATCC BAA-681) (Vibrio psychroerythus).